Reading from the N-terminus, the 1175-residue chain is MDKLPPSMRKRLYSLPQQVGAKAWIMDEEEDAEEEGAGGRQDPRRRSIRLRPLPSPSPSPSAAAAAAGGAESRGAALGGAADGEGPARGAAKSSTNGDCRRFRGSLASLGSRGGGGGGGSTGGGSHGHLHDSAEERRLIAEGDASPGEDRTPPGLAAEPERPGAPAPPAASPPQVPSSCGEQRPADAAVKVEGGAAAGDQILPEAEARLGQAGFMQRQFGAMLQPGVNKFSLRMFGSQKAVEREQERVKSAGFWIIHPYSDFRFYWDLTMLLLMVGNLIIIPVGITFFKDENTTPWIVFNVVSDTFFLIDLVLNFRTGIVVEDNTDIILDPRRIKMKYLKSWFVVDFVSSIPVDYIFLIVETRIDSEVYKTARALRIVRFTKILSLLRLLRLSRLIRYIHQWEEIFHMTYDLASAVVRIVNLIGMMLLLCHWDGCLQFLVPMLQDFPDDCWVSLNNMVNNSWGKQYSYALFKAMSHMLCIGYGRQAPMGMSDVWLTMLSMIVGATCYAMFIGHATALIQSLDSSRRQYQEKYKQVEQYMSFHKLPPDTRQRIHDYYEHRYQGKMFDEESILGELSEPLREEIINFNCRKLVASMPLFANADPNFVTSMLTKLRFEVFQPGDYIIREGTIGKKMYFIQHGVVSVLTKGNKETKLADGSYFGEICLLTRGRRTASVRADTYCRLYSLSVDNFNEVLEEYPMMRRAFETVALDRLDRIGKKNSILLHKVQHDLSSGVSNYQENAIVQRIVQHDREMAHCARRAQATTPVAPAIWTPLIQAPLQAAAATTSVAIALTHHPRLPAAIFRPPPGPTTLGSLGAGQTPRHLRRLQSLAPSAPSPASPASSPSQPDTPSSASLHVQPLPGCSTPAGLGSLLPTAGSPPAPTPPTTAGAAGFSHFHRALGGSLSSSDSPLLTPMQSAARSPQQPPPPPGAPAGLGLLEHFLPPPARSPTSSPGQLGQPPGELSPGLGSGPPGTPETPPRQPERLPFAAGASAGASPVAFSPRGGPSPPGHSPGTPRTFPSAPPRASGSHGSLLLPPASSPPPPPPPPAPQRRATPPLAPGRLSQDLKLISASQPALPQDGAQTLRRASPHSSSGESVAALPPFPRAPGRPPGAGPGQHVTLTLPRKASSGSLPPPLSLFGPRAAPAGGPRLTAAPQREPGAKSEPVRSKLPSNL.

Residues 1 to 259 are Cytoplasmic-facing; that stretch reads MDKLPPSMRK…SAGFWIIHPY (259 aa). The disordered stretch occupies residues 17-186; that stretch reads QQVGAKAWIM…SSCGEQRPAD (170 aa). The segment covering 26-36 has biased composition (acidic residues); that stretch reads MDEEEDAEEEG. A compositionally biased stretch (low complexity) spans 60-75; it reads PSAAAAAAGGAESRGA. The segment covering 111-126 has biased composition (gly residues); it reads SRGGGGGGGSTGGGSH. Over residues 128 to 140 the composition is skewed to basic and acidic residues; the sequence is HLHDSAEERRLIA. S145 is subject to Phosphoserine. A compositionally biased stretch (pro residues) spans 162–175; sequence PGAPAPPAASPPQV. The helical transmembrane segment at 260-288 threads the bilayer; it reads SDFRFYWDLTMLLLMVGNLIIIPVGITFF. The Extracellular portion of the chain corresponds to 289 to 292; that stretch reads KDEN. A helical transmembrane segment spans residues 293 to 316; that stretch reads TTPWIVFNVVSDTFFLIDLVLNFR. Over 317 to 329 the chain is Cytoplasmic; it reads TGIVVEDNTDIIL. Residues 330–352 form a helical membrane-spanning segment; it reads DPRRIKMKYLKSWFVVDFVSSIP. The Extracellular portion of the chain corresponds to 353–374; sequence VDYIFLIVETRIDSEVYKTARA. The chain crosses the membrane as a helical; Voltage-sensor span at residues 375-410; it reads LRIVRFTKILSLLRLLRLSRLIRYIHQWEEIFHMTY. Topologically, residues 411 to 413 are cytoplasmic; it reads DLA. A helical transmembrane segment spans residues 414–444; the sequence is SAVVRIVNLIGMMLLLCHWDGCLQFLVPMLQ. Topologically, residues 445-449 are extracellular; that stretch reads DFPDD. Positions 450–478 form an intramembrane region, pore-forming; that stretch reads CWVSLNNMVNNSWGKQYSYALFKAMSHML. The Extracellular segment spans residues 479–488; that stretch reads CIGYGRQAPM. Residues 489-521 form a helical membrane-spanning segment; it reads GMSDVWLTMLSMIVGATCYAMFIGHATALIQSL. The Cytoplasmic segment spans residues 522 to 1175; it reads DSSRRQYQEK…PVRSKLPSNL (654 aa). Y560, K563, F565, and E567 together coordinate 3',5'-cyclic GMP. Residues G660, E661, C663, R670, T671, V674, and R711 each contribute to the 3',5'-cyclic AMP site. Disordered stretches follow at residues 801–820 and 830–1175; these read AIFR…AGQT and LAPS…PSNL. Composition is skewed to low complexity over residues 839-854, 900-912, 948-966, and 984-1004; these read SPAS…SSAS, LGGS…SPLL, SPTS…LSPG, and RLPF…SPRG. The span at 1038-1050 shows a compositional bias: pro residues; sequence ASSPPPPPPPPAP. Phosphoserine occurs at positions 1089 and 1093. Residues 1102-1114 show a composition bias toward pro residues; sequence PPFPRAPGRPPGA.

It belongs to the potassium channel HCN family. In terms of assembly, homotetramer. The channel is composed of a homo- or heterotetrameric complex of pore-forming subunits. Interacts with PEX5L with a 4:4 HCN4:PEX5L stoichiometry; reduces the effects of cAMP on the voltage-dependence and rate of activation. Interacts with IRAG1; regulates HCN4 channel activity. Interacts with IRAG2; regulates HCN4 channel activity. S-palmitoylated. Highly expressed in the heart sinoatrial node (SAN). Not detected in atrium, ventricle, forebrain or cerebellum. Detected at very low levels in total brain.

It is found in the cell membrane. It carries out the reaction K(+)(in) = K(+)(out). The catalysed reaction is Na(+)(in) = Na(+)(out). Activated by cAMP and to a lesser extent by cGMP and cCMP. cAMP binding causes a conformation change that leads to the assembly of an active tetramer and channel opening by shifting the voltage-dependency towards more positive voltages. Binding of cAMP removes a tonic inhibition conferred by cyclic nucleotide-binding domain (CNBD) on channel opening. Cyclic dinucleotides can modulate HCN4 channel; cyclic dinucleotides acting as potent antagonists of cAMP. Inhibited by extracellular Cs(+) ions. Auxiliary subunits can also regulate HCN4 channel. IRAG1 causes a gain-of-function by shifting HCN4 activation to more depolarized membrane potentials in the absence of cAMP. In contrast, IRAG2 causes a loss-of-function by inhibiting cAMP-dependent potentiation of HCN4 activation. Hyperpolarization-activated ion channel that are permeable to Na(+) and K(+) ions with very slow activation and inactivation. Exhibits higher selectivity for K(+) over Na(+) ions. Contributes to the native pacemaker currents in heart (If) that regulate the rhythm of heart beat. Contributes to the native pacemaker currents in neurons (Ih). May mediate responses to sour stimuli. This chain is Potassium/sodium hyperpolarization-activated cyclic nucleotide-gated channel 4 (HCN4), found in Oryctolagus cuniculus (Rabbit).